A 61-amino-acid chain; its full sequence is Putative antitoxin APE_0472b.1 (61 aa).

It belongs to the UPF0165 family.

In terms of biological role, possibly the antitoxin component of a type II toxin-antitoxin (TA) system. In Aeropyrum pernix (strain ATCC 700893 / DSM 11879 / JCM 9820 / NBRC 100138 / K1), this protein is Putative antitoxin APE_0472b.1.